An 816-amino-acid polypeptide reads, in one-letter code: S-layer protein (816 aa).

An N-terminal signal peptide occupies residues 1–29 (MAKTNSYKKVIAGTMTAAMVAGVVSPVAA). 3 SLH domains span residues 30 to 93 (AGKS…DAKP), 94 to 150 (SFAD…KVNG), and 152 to 215 (PATK…VAKV). A BIG2 domain is found at 403-480 (FTSKDFKQND…TVKDSKGKEL (78 aa)).

The protein resides in the secreted. It is found in the cell wall. It localises to the S-layer. In terms of biological role, the S-layer is a paracrystalline mono-layered assembly of proteins which coat the surface of bacteria. The sequence is that of S-layer protein from Bacillus thuringiensis subsp. finitimus.